A 61-amino-acid chain; its full sequence is Lens epithelial cell protein LEP503 (61 aa).

This chain is Lens epithelial cell protein LEP503 (Lenep), found in Mus musculus (Mouse).